The primary structure comprises 431 residues: Cleavage stimulation factor subunit 1 (431 aa).

The tract at residues 14–35 (LYKLIISQLLYDGYISIANGLI) is hydrophobic. 6 WD repeats span residues 106–145 (SHKG…AKSA), 171–210 (DHVD…AKRA), 215–254 (QEAE…CFVS), 260–301 (QHTD…TTFE), 303–343 (AHDG…TLVR), and 395–430 (GHNN…RSTT).

Homodimer. The CSTF complex is composed of CSTF1 (50 kDa subunit), CSTF2 (64 kDa subunit) and CSTF3 (77 kDa subunit). Interacts (via repeats WD) directly with CSTF3. Interacts (via repeat WD6) with BARD1. Interacts with ERCC6. The N-terminus is blocked.

Its subcellular location is the nucleus. In terms of biological role, one of the multiple factors required for polyadenylation and 3'-end cleavage of mammalian pre-mRNAs. May be responsible for the interaction of CSTF with other factors to form a stable complex on the pre-mRNA. The chain is Cleavage stimulation factor subunit 1 (CSTF1) from Homo sapiens (Human).